The following is a 245-amino-acid chain: Adenosylcobinamide-GDP ribazoletransferase (245 aa).

Transmembrane regions (helical) follow at residues 31-51 (FGRA…VLYA), 61-81 (PLLQ…ALHL), 113-133 (VAVV…AALL), 138-158 (AGLL…LFLT), and 192-212 (LAFG…FAWL).

The protein belongs to the CobS family. The cofactor is Mg(2+).

It localises to the cell inner membrane. It carries out the reaction alpha-ribazole + adenosylcob(III)inamide-GDP = adenosylcob(III)alamin + GMP + H(+). It catalyses the reaction alpha-ribazole 5'-phosphate + adenosylcob(III)inamide-GDP = adenosylcob(III)alamin 5'-phosphate + GMP + H(+). It participates in cofactor biosynthesis; adenosylcobalamin biosynthesis; adenosylcobalamin from cob(II)yrinate a,c-diamide: step 7/7. Joins adenosylcobinamide-GDP and alpha-ribazole to generate adenosylcobalamin (Ado-cobalamin). Also synthesizes adenosylcobalamin 5'-phosphate from adenosylcobinamide-GDP and alpha-ribazole 5'-phosphate. The polypeptide is Adenosylcobinamide-GDP ribazoletransferase (Pseudomonas aeruginosa (strain UCBPP-PA14)).